Reading from the N-terminus, the 124-residue chain is uncharacterized protein (124 aa).

Disordered stretches follow at residues 1–26 and 100–124; these read MRRQ…QPRP and IPGQ…GLRR. A compositionally biased stretch (polar residues) spans 102–115; it reads GQQSRNCSLPQTKY.

Its subcellular location is the cytoplasm. It localises to the cytoskeleton. The protein localises to the cilium basal body. This is an uncharacterized protein from Rattus norvegicus (Rat).